Reading from the N-terminus, the 1058-residue chain is Ubiquitin-like modifier-activating enzyme 1 (1058 aa).

The disordered stretch occupies residues 1 to 47; it reads MSSSPLSKKRRVSGPDPKPGSNCSPAQSVLSEVPSVPTNGMAKNGSE. Position 2 is an N-acetylserine (Ser2). Ser2 is modified (N-acetylalanine). Ser4 carries the post-translational modification Phosphoserine. The short motif at 5-11 is the Nuclear localization signal element; it reads PLSKKRR. Phosphoserine is present on residues Ser13, Ser21, Ser24, and Ser46. Over residues 21–30 the composition is skewed to polar residues; it reads SNCSPAQSVL. Tyr55 is subject to Phosphotyrosine. 2 consecutive repeat copies span residues 63-199 and 459-611. Residues 63–611 are 2 approximate repeats; that stretch reads GHEAMKRLQT…GTKGNVQVVI (549 aa). ATP contacts are provided by residues Ala478, Asp504, Arg515, Lys528, and 576–577; that span reads DN. An N6-succinyllysine modification is found at Lys528. Cys632 (glycyl thioester intermediate) is an active-site residue. Lys671 carries the N6-acetyllysine modification. A Phosphothreonine modification is found at Thr800. Ser810, Ser816, Ser820, and Ser835 each carry phosphoserine. Residue Lys980 is modified to N6-acetyllysine.

It belongs to the ubiquitin-activating E1 family. In terms of assembly, monomer. Interacts with GAN (via BTB domain). Post-translationally, ISGylated. Detected in erythrocytes (at protein level). Ubiquitous.

It localises to the cytoplasm. It is found in the mitochondrion. Its subcellular location is the nucleus. It catalyses the reaction ATP + ubiquitin + [E1 ubiquitin-activating enzyme]-L-cysteine = AMP + diphosphate + S-ubiquitinyl-[E1 ubiquitin-activating enzyme]-L-cysteine.. Its pathway is protein modification; protein ubiquitination. Functionally, catalyzes the first step in ubiquitin conjugation to mark cellular proteins for degradation through the ubiquitin-proteasome system. Activates ubiquitin by first adenylating its C-terminal glycine residue with ATP, and thereafter linking this residue to the side chain of a cysteine residue in E1, yielding a ubiquitin-E1 thioester and free AMP. Essential for the formation of radiation-induced foci, timely DNA repair and for response to replication stress. Promotes the recruitment of TP53BP1 and BRCA1 at DNA damage sites. This chain is Ubiquitin-like modifier-activating enzyme 1 (UBA1), found in Homo sapiens (Human).